The sequence spans 1709 residues: Protein SHORTAGE IN CHIASMATA 1 homolog (1709 aa).

3 stretches are compositionally biased toward basic and acidic residues: residues 532–542 (PKLQDEDKHSD), 552–568 (DPQK…EGGT), and 1601–1613 (ESFR…DTPS). Disordered stretches follow at residues 532–586 (PKLQ…SSFP) and 1566–1662 (KRKA…DPTW).

This sequence belongs to the XPF family. Interacts (via C-terminus) with PTD. Interacts with ZIP4. Highly expressed in anthers and pistil during meiosis. Expressed in pollen mother cells (PMCs) during meiosis. Expressed at low levels in roots, shoots, leaves, flowers, and glumes.

The protein localises to the chromosome. It localises to the nucleus. It is found in the cytoplasm. The protein resides in the cell membrane. Its function is as follows. Essential for normal crossover (CO) formation during meiosis. Essential component for the formation of class I meiotic COs. Interacts with PTD, another meiotic component, to regulate CO formation, possibly by stabilizing the recombination intermediates during meiosis. SHOC1 and PTD may form transient heterotrimeric or heterotetrameric complexes with HEI10 and/or ZIP4 to promote class I COs formation. Does not seem to be involved in early meiotic recombination steps involving double-strand break (DSB) formation, processing, and single-strand invasion. Does not seem to be involved in homologous pairing or synaptonemal complex (SC) assembly. The sequence is that of Protein SHORTAGE IN CHIASMATA 1 homolog from Oryza sativa subsp. japonica (Rice).